We begin with the raw amino-acid sequence, 1502 residues long: E3 ubiquitin-protein ligase UPL4 (1502 aa).

A compositionally biased stretch (basic and acidic residues) spans 1–21 (MENRGQKRMEVVEELPADKRA). The disordered stretch occupies residues 1-107 (MENRGQKRME…DYQRQRSSGD (107 aa)). The segment covering 22 to 46 (CNSQDFRPSTSGSSVQAQANDTNPG) has biased composition (polar residues). The span at 67-90 (DEEEQEEQDKEDSDYGSCDSDEED) shows a compositional bias: acidic residues. Residues 91–107 (PRQRVLQDYQRQRSSGD) show a composition bias toward basic and acidic residues. ARM repeat units follow at residues 143-183 (EESL…YLCD), 186-226 (PPSV…KISR), 228-265 (EPVACLNAGAIMAVLSFIDFFSTSIQRVAISTVVNICK), and 267-306 (LSSESPSPFMDAVPILCTLLQYEDRQLVENVAICLTKIAD). The disordered stretch occupies residues 833–881 (CQAESSSPMEIDSESSDASQLQGSQVEDQTQLPGQQNASSSETSSEKED). Residues 849 to 875 (DASQLQGSQVEDQTQLPGQQNASSSET) show a composition bias toward polar residues. The interval 1022–1096 (RPVPHSEFVS…IRHHPQHLSS (75 aa)) is K-box. The HECT domain maps to 1128–1502 (KMMELYGNQK…TEGQGSFHLS (375 aa)). The Glycyl thioester intermediate role is filled by C1469.

The protein belongs to the UPL family. K-HECT subfamily.

The enzyme catalyses S-ubiquitinyl-[E2 ubiquitin-conjugating enzyme]-L-cysteine + [acceptor protein]-L-lysine = [E2 ubiquitin-conjugating enzyme]-L-cysteine + N(6)-ubiquitinyl-[acceptor protein]-L-lysine.. Its pathway is protein modification; protein ubiquitination. Its function is as follows. Probable E3 ubiquitin-protein ligase which mediates ubiquitination and subsequent proteasomal degradation of target proteins. The sequence is that of E3 ubiquitin-protein ligase UPL4 (UPL4) from Arabidopsis thaliana (Mouse-ear cress).